We begin with the raw amino-acid sequence, 113 residues long: Probable mesentericin-Y105 immunity protein (113 aa).

It belongs to the immunity protein EntA family.

Imparts immunity to mesentericin-Y105 to naturally sensitive host strains. The sequence is that of Probable mesentericin-Y105 immunity protein (mesI) from Leuconostoc mesenteroides.